Consider the following 1587-residue polypeptide: DNA topoisomerase 2 (1587 aa).

The span at 1–15 shows a compositional bias: acidic residues; it reads MSDADPFDMSDDDDN. The interval 1 to 47 is disordered; it reads MSDADPFDMSDDDDNSVLSHTPPKKQKKAPTTKKGGSKPLADVENES. The span at 22–31 shows a compositional bias: basic residues; the sequence is PPKKQKKAPT. ATP contacts are provided by residues asparagine 126, asparagine 155, 183 to 185, and 196 to 203; these read SSN and GRNGFGAK. 2 interaction with DNA regions span residues 381–383 and 381–386; these read KKK and KKKNKN. Position 415–417 (415–417) interacts with ATP; the sequence is QTK. Residues 461–485 form a disordered region; that stretch reads MLKKTDGGRRSRMNNPKLTDANKAG. One can recognise a Toprim domain in the interval 492–606; the sequence is CTLILTEGDS…SLLKIPEFLI (115 aa). Mg(2+) contacts are provided by glutamate 498, aspartate 575, and aspartate 577. Positions 743 to 1190 constitute a Topo IIA-type catalytic domain; sequence IPSVVDGLKP…SKEDIWKRDL (448 aa). Catalysis depends on tyrosine 833, which acts as the O-(5'-phospho-DNA)-tyrosine intermediate. Residues 1016–1025 form an interaction with DNA region; it reads KLSKTMTTTN. Residues 1204–1587 are disordered; sequence EARRQRKVAN…PRPRRPRRRS (384 aa). Residues 1271 to 1280 are compositionally biased toward low complexity; the sequence is LSFLGKSSAK. Residues 1308–1320 show a composition bias toward basic and acidic residues; sequence PKSEPKADPKPKD. Over residues 1321-1334 the composition is skewed to acidic residues; that stretch reads EDEDIVMEDSDIEE. A compositionally biased stretch (basic and acidic residues) spans 1348-1364; sequence VKPESEDGQAKIAEAPK. A compositionally biased stretch (basic residues) spans 1365–1375; that stretch reads RGRAAAKPKPK. 2 stretches are compositionally biased toward acidic residues: residues 1379–1391 and 1419–1430; these read EDEE…DDFM and SDSDSDNGDDLL. Polar residues-rich tracts occupy residues 1441-1451 and 1466-1475; these read GSTNGASTSDS and GLKTTASKAS. Positions 1512–1521 are enriched in acidic residues; the sequence is DNEPEDDDDE. Residues 1524-1542 show a composition bias toward low complexity; the sequence is KPAAKGKAAAKGKSTAAAA. Residues 1558–1568 are compositionally biased toward pro residues; the sequence is PKPPPRLPCPL. Positions 1571 to 1587 are enriched in basic residues; sequence RRTHRSNPRPRRPRRRS.

Belongs to the type II topoisomerase family. As to quaternary structure, homodimer. The cofactor is Mg(2+). Mn(2+) is required as a cofactor. Ca(2+) serves as cofactor.

It localises to the nucleus. It catalyses the reaction ATP-dependent breakage, passage and rejoining of double-stranded DNA.. In terms of biological role, control of topological states of DNA by transient breakage and subsequent rejoining of DNA strands. Topoisomerase II makes double-strand breaks. The protein is DNA topoisomerase 2 (TOP2) of Penicillium chrysogenum (Penicillium notatum).